A 615-amino-acid polypeptide reads, in one-letter code: Coagulation factor XII (615 aa).

An N-terminal signal peptide occupies residues 1-19 (MRALLLLGFLLVSLESTLS). Positions 42 to 90 (VTGEPCHFPFQYHRQLYHKCTHKGRPGPQPWCATTPNFDQDQRWGYCLE) constitute a Fibronectin type-II domain. Disulfide bonds link cysteine 47/cysteine 73, cysteine 61/cysteine 88, cysteine 98/cysteine 110, cysteine 104/cysteine 119, cysteine 121/cysteine 130, cysteine 135/cysteine 163, cysteine 161/cysteine 170, cysteine 178/cysteine 189, cysteine 183/cysteine 198, cysteine 200/cysteine 209, cysteine 217/cysteine 295, cysteine 238/cysteine 277, and cysteine 266/cysteine 290. An EGF-like 1 domain is found at 94 to 131 (VKDHCSKHSPCQKGGTCVNMPSGPHCLCPQHLTGNHCQ). A glycan (O-linked (Fuc) threonine) is linked at threonine 109. The Fibronectin type-I domain occupies 133–173 (EKCFEPQLLRFFHKNEIWYRTEQAAVARCQCKGPDAHCQRL). Positions 174-210 (ASQACRTNPCLHGGRCLEVEGHRLCHCPVGYTGAFCD) constitute an EGF-like 2 domain. The 79-residue stretch at 217-295 (CYDGRGLSYR…SWEYCDLAQC (79 aa)) folds into the Kringle domain. Residue asparagine 249 is glycosylated (N-linked (GlcNAc...) asparagine). Residues 298-359 (PTQAAPPTPV…SLTRNGPLSC (62 aa)) form a disordered region. Threonine 299 and threonine 305 each carry an O-linked (GalNAc...) threonine glycan. O-linked (GalNAc...) serine glycosylation occurs at serine 308. Residues 317 to 326 (PAQPAPPKPQ) are compositionally biased toward pro residues. A compositionally biased stretch (low complexity) spans 327–338 (PTTRTPPQSQTP). O-linked (GalNAc...) threonine glycosylation is found at threonine 328, threonine 329, and threonine 337. Intrachain disulfides connect cysteine 359-cysteine 486, cysteine 397-cysteine 413, cysteine 405-cysteine 475, cysteine 436-cysteine 439, cysteine 500-cysteine 569, cysteine 532-cysteine 548, and cysteine 559-cysteine 590. The region spanning 373–614 (VVGGLVALRG…YLAWIREHTV (242 aa)) is the Peptidase S1 domain. Histidine 412 (charge relay system) is an active-site residue. Residue asparagine 433 is glycosylated (N-linked (GlcNAc...) asparagine). Residue aspartate 461 is the Charge relay system of the active site. The active-site Charge relay system is the serine 563.

This sequence belongs to the peptidase S1 family. Interacts with HRG; the interaction, which is enhanced in the presence of zinc ions and inhibited by heparin-binding, inhibits factor XII autoactivation and contact-initiated coagulation. Interacts (inactive and activated) with D7L2, an anticoagulant protein from Anopheles gambiae. Interacts (activated) with iripin-8, a serine protease inhibitor from Ixodes ricinus saliva. Interacts (inactive and activated) (via amino acids 1-77) with triafestin-1 and triafestin-2, anticoagulant proteins from Triatoma infestans. Interacts (inactive and activated) (via amino acids 1-77) with short form salivary protein D7R1, an anticoagulant protein from Anopheles stephensi. Interacts (inactive and activated) (via fibronectin type II domain) with haemaphysalin, an anticoagulant protein from Haemaphysalis longicornis. Factor XII is activated by kallikrein in alpha-factor XIIa, which is further converted by trypsin into beta-factor XIIa. Alpha-factor XIIa is composed of an NH2-terminal heavy chain, called coagulation factor XIIa heavy chain, and a COOH-terminal light chain, called coagulation factor XIIa light chain, connected by a disulfide bond. Beta-factor XIIa is composed of 2 chains linked by a disulfide bond, an N-terminal nonapeptide, called beta-factor XIIa part 1, and coagulation factor XIIa light chain, also known in this context as beta-factor XIIa part 2. In terms of processing, O- and N-glycosylated. The O-linked polysaccharides were not identified, but are probably the mucin type linked to GalNAc.

It is found in the secreted. The enzyme catalyses Selective cleavage of Arg-|-Ile bonds in factor VII to form factor VIIa and factor XI to form factor XIa.. Activity is promoted in the presence of negatively charged surfaces. Its function is as follows. Factor XII is a serum glycoprotein that participates in the initiation of blood coagulation, fibrinolysis, and the generation of bradykinin and angiotensin. Prekallikrein is cleaved by factor XII to form kallikrein, which then cleaves factor XII first to alpha-factor XIIa and then trypsin cleaves it to beta-factor XIIa. Alpha-factor XIIa activates factor XI to factor XIa. The sequence is that of Coagulation factor XII (F12) from Homo sapiens (Human).